A 274-amino-acid polypeptide reads, in one-letter code: Large ribosomal subunit protein uL2 (274 aa).

Disordered regions lie at residues 28–53 (KPYAPLLEKNSKSGGRNNNGRITVRH) and 223–274 (VAMN…RRTK). Positions 39–48 (KSGGRNNNGR) are enriched in low complexity. Residues 254 to 274 (KGAKTRKNKRTDKFIVRRRTK) show a composition bias toward basic residues.

This sequence belongs to the universal ribosomal protein uL2 family. In terms of assembly, part of the 50S ribosomal subunit. Forms a bridge to the 30S subunit in the 70S ribosome.

Functionally, one of the primary rRNA binding proteins. Required for association of the 30S and 50S subunits to form the 70S ribosome, for tRNA binding and peptide bond formation. It has been suggested to have peptidyltransferase activity; this is somewhat controversial. Makes several contacts with the 16S rRNA in the 70S ribosome. This is Large ribosomal subunit protein uL2 from Pseudoalteromonas translucida (strain TAC 125).